A 1008-amino-acid chain; its full sequence is RNA cytidine acetyltransferase (1008 aa).

Residues 282 to 291 (GRGKSAALGL) and Arg-443 contribute to the ATP site. The region spanning 531–713 (CLLGPVQRMD…VPVYLSQKSN (183 aa)) is the N-acetyltransferase domain. Acetyl-CoA-binding positions include 601–603 (VAT), 608–614 (QRMGYGK), and Asn-700. A Phosphoserine modification is found at Ser-907. A disordered region spans residues 950–1008 (ALETNGTGGGSGLLSVKSGVKRLDGPIETREDGDLAAPLSKKKKKNNPKQRRSQGKSLI). Basic and acidic residues predominate over residues 970–982 (KRLDGPIETREDG). A compositionally biased stretch (basic residues) spans 989–1008 (SKKKKKNNPKQRRSQGKSLI).

This sequence belongs to the RNA cytidine acetyltransferase family. NAT10 subfamily. Component of the PRC1 complex (PSC, PC, PH and dRING1) in 0-12 hours Drosophila embryos. This complex is distinct from the Esc/E(z) complex, which contains many other PcG proteins like Esc, E(z), Su(z)12, HDAC1/Rpd3, Caf1-55 and probably Pho. The two complexes however cooperate and interact together during the first 3 hours of development to establish PcG silencing. Part of the small subunit (SSU) processome, composed of more than 70 proteins and the RNA chaperone small nucleolar RNA (snoRNA) U3.

It localises to the nucleus. It is found in the nucleolus. It catalyses the reaction a cytidine in 18S rRNA + acetyl-CoA + ATP + H2O = an N(4)-acetylcytidine in 18S rRNA + ADP + phosphate + CoA + H(+). The enzyme catalyses a cytidine in tRNA + acetyl-CoA + ATP + H2O = an N(4)-acetylcytidine in tRNA + ADP + phosphate + CoA + H(+). RNA cytidine acetyltransferase with specificity toward both 18S rRNA and tRNAs. Catalyzes the formation of N(4)-acetylcytidine (ac4C) in 18S rRNA. Required for early nucleolar cleavages of precursor rRNA at sites A0, A1 and A2 during 18S rRNA synthesis. Catalyzes the formation of ac4C in serine and leucine tRNAs. Requires a tRNA-binding adapter protein for full tRNA acetyltransferase activity but not for 18S rRNA acetylation. Polycomb group (PcG) protein. PcG proteins act by forming multiprotein complexes, which are required to maintain the transcriptionally repressive state of homeotic genes throughout development. PcG proteins are not required to initiate repression, but to maintain it during later stages of development. They probably act via the methylation of histones, rendering chromatin heritably changed in its expressibility. Part of the small subunit (SSU) processome, first precursor of the small eukaryotic ribosomal subunit. During the assembly of the SSU processome in the nucleolus, many ribosome biogenesis factors, an RNA chaperone and ribosomal proteins associate with the nascent pre-rRNA and work in concert to generate RNA folding, modifications, rearrangements and cleavage as well as targeted degradation of pre-ribosomal RNA by the RNA exosome. The polypeptide is RNA cytidine acetyltransferase (l(1)G0020) (Drosophila melanogaster (Fruit fly)).